The following is a 345-amino-acid chain: Nuclear distribution protein nudE-like 1 (345 aa).

A coiled-coil region spans residues 27-190 (KQTFQEARDE…LAVRERQQEV (164 aa)). Residues 56 to 166 (VQAEQRNRDL…LDEKESLLVS (111 aa)) form a self-association region. Residues 64–189 (DLQADNQRLK…ELAVRERQQE (126 aa)) are interaction with KATNB1. The segment at 114–133 (YVRELEQANDDLERAKRATI) is required for interaction with PAFAH1B1. The interaction with CENPF stretch occupies residues 175–345 (RDLRQELAVR…SAPGMLPLSV (171 aa)). Positions 189–256 (EVTRKSAPSS…SARISALNIV (68 aa)) are interaction with YWHAE. Residues 191–345 (TRKSAPSSPT…SAPGMLPLSV (155 aa)) are interaction with NEFL. The interaction with KATNA1 stretch occupies residues 195–256 (APSSPTLDCE…SARISALNIV (62 aa)). Residue serine 215 is modified to Phosphoserine. The segment at 217-240 (PATPVGKGTENSFPSPKAIPNGFG) is disordered. Threonine 219 carries the phosphothreonine; by CDK1 and MAPK1 modification. Residues 227-278 (NSFPSPKAIPNGFGTSPLTPSARISALNIVGDLLRKVGALESKLAACRNFAK) form an interaction with DISC1 region. A Phosphoserine modification is found at serine 231. Serine 242 is modified (phosphoserine; by CDK1). A Phosphothreonine; by CDK1 and MAPK1 modification is found at threonine 245. Positions 256–291 (VGDLLRKVGALESKLAACRNFAKDQASRKSYISGNV) are required for localization to the centrosome and interaction with dynein, dynactin, tubulin gamma, PCM1 and PCNT. Residue cysteine 273 is the site of S-palmitoyl cysteine; by ZDHHC2, ZDHHC3 and ZDHHC7 attachment. Residues 316 to 345 (AVNGFDPAPPPPGLGSSRPLSAPGMLPLSV) form a disordered region. A compositionally biased stretch (low complexity) spans 329–339 (LGSSRPLSAPG). At serine 344 the chain carries Phosphoserine.

The protein belongs to the nudE family. Self-associates. Interacts with DISC1, dynein, dynactin, tubulin gamma, KATNA1, KATNB1, microtubules, PAFAH1B1, PCM1, PCNT, and YWHAE. Interacts directly with NEFL and indirectly with NEFH. Interacts (via C-terminus) with CENPF. Interacts with ZNF365. Interacts with PLEKHM1 (via N- and C-terminus). Interacts with GTP-bound RAB9A; the interaction may lead to RAB9A-dynein motor tethering. Phosphorylated in mitosis. Can be phosphorylated by CDK1, CDK5 and MAPK1. Phosphorylation by CDK5 promotes interaction with KATNA1 and YWHAE. In terms of processing, palmitoylation at Cys-273 reduces affinity for dynein. Expressed at low levels in heart, hypothalamus, liver, lung, spleen and stomach. Expressed at higher levels in testis and brain. Within the brain, expressed in cerebellum, cerebral stem, cortex and striatum.

It localises to the cytoplasm. Its subcellular location is the cytoskeleton. It is found in the microtubule organizing center. The protein localises to the centrosome. The protein resides in the chromosome. It localises to the centromere. Its subcellular location is the kinetochore. It is found in the spindle. Required for organization of the cellular microtubule array and microtubule anchoring at the centrosome. May regulate microtubule organization at least in part by targeting the microtubule severing protein KATNA1 to the centrosome. Also positively regulates the activity of the minus-end directed microtubule motor protein dynein. May enhance dynein-mediated microtubule sliding by targeting dynein to the microtubule plus ends. Required for several dynein- and microtubule-dependent processes such as the maintenance of Golgi integrity, the centripetal motion of secretory vesicles and the coupling of the nucleus and centrosome. Also required during brain development for the migration of newly formed neurons from the ventricular/subventricular zone toward the cortical plate. Plays a role, together with DISC1, in the regulation of neurite outgrowth. Required for mitosis in some cell types but appears to be dispensible for mitosis in cortical neuronal progenitors, which instead requires NDE1. Facilitates the polymerization of neurofilaments from the individual subunits NEFH and NEFL. Positively regulates lysosome peripheral distribution and ruffled border formation in osteoclasts. Plays a role, together with DISC1, in the regulation of neurite outgrowth. May act as a RAB9A/B effector that tethers RAB9-associated late endosomes to the dynein motor for their retrograde transport to the trans-Golgi network. This is Nuclear distribution protein nudE-like 1 (NDEL1) from Oryctolagus cuniculus (Rabbit).